The chain runs to 284 residues: D-tagatose-1,6-bisphosphate aldolase subunit GatY (284 aa).

Residue Asp-82 is the Proton donor of the active site. 2 residues coordinate Zn(2+): His-83 and His-180. Gly-181 contributes to the dihydroxyacetone phosphate binding site. Residue His-208 participates in Zn(2+) binding. Residues 209 to 211 (GAS) and 230 to 233 (NVAT) contribute to the dihydroxyacetone phosphate site.

It belongs to the class II fructose-bisphosphate aldolase family. TagBP aldolase GatY subfamily. As to quaternary structure, forms a complex with GatZ. The cofactor is Zn(2+).

The enzyme catalyses D-tagatofuranose 1,6-bisphosphate = D-glyceraldehyde 3-phosphate + dihydroxyacetone phosphate. Its pathway is carbohydrate metabolism; D-tagatose 6-phosphate degradation; D-glyceraldehyde 3-phosphate and glycerone phosphate from D-tagatose 6-phosphate: step 2/2. Functionally, catalytic subunit of the tagatose-1,6-bisphosphate aldolase GatYZ, which catalyzes the reversible aldol condensation of dihydroxyacetone phosphate (DHAP or glycerone-phosphate) with glyceraldehyde 3-phosphate (G3P) to produce tagatose 1,6-bisphosphate (TBP). Requires GatZ subunit for full activity and stability. Is involved in the catabolism of galactitol. The polypeptide is D-tagatose-1,6-bisphosphate aldolase subunit GatY (Salmonella typhi).